The chain runs to 202 residues: LexA repressor (202 aa).

Positions 28–48 (RAEIAQRLGFRSPNAAEEHLK) form a DNA-binding region, H-T-H motif. Catalysis depends on for autocatalytic cleavage activity residues serine 119 and lysine 156.

It belongs to the peptidase S24 family. Homodimer.

It catalyses the reaction Hydrolysis of Ala-|-Gly bond in repressor LexA.. Functionally, represses a number of genes involved in the response to DNA damage (SOS response), including recA and lexA. Binds to the 16 bp palindromic sequence 5'-CTGTATATATATACAG-3'. In the presence of single-stranded DNA, RecA interacts with LexA causing an autocatalytic cleavage which disrupts the DNA-binding part of LexA, leading to derepression of the SOS regulon and eventually DNA repair. The protein is LexA repressor of Edwardsiella ictaluri (strain 93-146).